The following is a 288-amino-acid chain: MATYAVGDLQGCLQPLKCLLDRVSFNPAVDRLWLVGDLVNRGPESLETLRFLYSIRHSLVCVLGNHDLHLLAAWHNVERLKKSDTLREIIEAPDADQLFDWLRQQKLLHYDEPRGIALVHAGIPPQWTLGKALELAAEVEEVLRDDTRLQLYLDGMYGNEPNKWSKNLAGVERLRVITNYFTRMRFCTADGKLDLKSKEGLGSAPKGYKAWYAHKDRRSRHVKIIFGHWAALQGEVTEPDVIALDTGCVWGGAMTLYNVDSGEYHRCDCADDGTLRQPAQPTTLNDHT.

The protein belongs to the Ap4A hydrolase family.

It catalyses the reaction P(1),P(4)-bis(5'-adenosyl) tetraphosphate + H2O = 2 ADP + 2 H(+). Its function is as follows. Hydrolyzes diadenosine 5',5'''-P1,P4-tetraphosphate to yield ADP. The protein is Bis(5'-nucleosyl)-tetraphosphatase, symmetrical of Pseudomonas putida (strain ATCC 700007 / DSM 6899 / JCM 31910 / BCRC 17059 / LMG 24140 / F1).